A 661-amino-acid polypeptide reads, in one-letter code: Kyphoscoliosis peptidase (661 aa).

The tract at residues 116–137 (GDKNGNMRPRQPGGKDAHAYPW) is disordered. Residues cysteine 225, histidine 267, and aspartate 282 contribute to the active site.

It belongs to the transglutaminase-like superfamily. Interacts with IGFN1 and FLNC. As to expression, specifically expressed in skeletal and cardiac muscle.

It is found in the cytoplasm. It localises to the cytoskeleton. Its subcellular location is the myofibril. The protein resides in the sarcomere. The protein localises to the z line. Its function is as follows. Probable cytoskeleton-associated protease required for normal muscle growth. Involved in function, maturation and stabilization of the neuromuscular junction. May act by cleaving muscle-specific proteins such as FLNC. In Mus musculus (Mouse), this protein is Kyphoscoliosis peptidase.